A 645-amino-acid polypeptide reads, in one-letter code: 1-deoxy-D-xylulose-5-phosphate synthase (645 aa).

Residues His79 and 120-122 contribute to the thiamine diphosphate site; that span reads AHS. Asp155 serves as a coordination point for Mg(2+). Thiamine diphosphate contacts are provided by residues 156–157, Asn184, Tyr293, and Glu375; that span reads GA. Mg(2+) is bound at residue Asn184.

This sequence belongs to the transketolase family. DXPS subfamily. Homodimer. Mg(2+) serves as cofactor. The cofactor is thiamine diphosphate.

The enzyme catalyses D-glyceraldehyde 3-phosphate + pyruvate + H(+) = 1-deoxy-D-xylulose 5-phosphate + CO2. It participates in metabolic intermediate biosynthesis; 1-deoxy-D-xylulose 5-phosphate biosynthesis; 1-deoxy-D-xylulose 5-phosphate from D-glyceraldehyde 3-phosphate and pyruvate: step 1/1. Its function is as follows. Catalyzes the acyloin condensation reaction between C atoms 2 and 3 of pyruvate and glyceraldehyde 3-phosphate to yield 1-deoxy-D-xylulose-5-phosphate (DXP). This is 1-deoxy-D-xylulose-5-phosphate synthase from Ruegeria sp. (strain TM1040) (Silicibacter sp.).